A 398-amino-acid chain; its full sequence is Nonsense-mediated decay protein 4 (398 aa).

The tract at residues 327-355 (PVTSNYRGKNNRGRNNRGRRGNKRRERER) is disordered. Residues 335–350 (KNNRGRNNRGRRGNKR) show a composition bias toward basic residues.

The protein localises to the cytoplasm. Functionally, involved in nonsense-mediated decay of mRNAs containing premature stop codons. The sequence is that of Nonsense-mediated decay protein 4 (NMD4) from Candida albicans (strain SC5314 / ATCC MYA-2876) (Yeast).